A 1520-amino-acid polypeptide reads, in one-letter code: DNA-directed RNA polymerase subunit beta'' (1520 aa).

C220, C296, C303, and C306 together coordinate Zn(2+). Composition is skewed to basic and acidic residues over residues T645–E654 and P664–E674. 2 disordered regions span residues T645–E676 and Y705–G786. 2 stretches are compositionally biased toward acidic residues: residues G730 to D748 and T756 to D779.

The protein belongs to the RNA polymerase beta' chain family. RpoC2 subfamily. As to quaternary structure, in plastids the minimal PEP RNA polymerase catalytic core is composed of four subunits: alpha, beta, beta', and beta''. When a (nuclear-encoded) sigma factor is associated with the core the holoenzyme is formed, which can initiate transcription. The cofactor is Zn(2+).

The protein localises to the plastid. It is found in the chloroplast. The catalysed reaction is RNA(n) + a ribonucleoside 5'-triphosphate = RNA(n+1) + diphosphate. Functionally, DNA-dependent RNA polymerase catalyzes the transcription of DNA into RNA using the four ribonucleoside triphosphates as substrates. The protein is DNA-directed RNA polymerase subunit beta'' of Sorghum bicolor (Sorghum).